The following is a 209-amino-acid chain: Uracil phosphoribosyltransferase (209 aa).

Residues arginine 79, arginine 104, and 131-139 contribute to the 5-phospho-alpha-D-ribose 1-diphosphate site; that span reads DPMLATGGS. Uracil is bound by residues isoleucine 194 and 199–201; that span reads GDA. Aspartate 200 contacts 5-phospho-alpha-D-ribose 1-diphosphate.

It belongs to the UPRTase family. It depends on Mg(2+) as a cofactor.

The catalysed reaction is UMP + diphosphate = 5-phospho-alpha-D-ribose 1-diphosphate + uracil. It participates in pyrimidine metabolism; UMP biosynthesis via salvage pathway; UMP from uracil: step 1/1. Allosterically activated by GTP. Functionally, catalyzes the conversion of uracil and 5-phospho-alpha-D-ribose 1-diphosphate (PRPP) to UMP and diphosphate. This chain is Uracil phosphoribosyltransferase, found in Lysinibacillus sphaericus (strain C3-41).